We begin with the raw amino-acid sequence, 291 residues long: Bifunctional protein FolD (291 aa).

Residues 165 to 167, Ser-190, and Ile-231 contribute to the NADP(+) site; that span reads GRS.

This sequence belongs to the tetrahydrofolate dehydrogenase/cyclohydrolase family. In terms of assembly, homodimer.

The enzyme catalyses (6R)-5,10-methylene-5,6,7,8-tetrahydrofolate + NADP(+) = (6R)-5,10-methenyltetrahydrofolate + NADPH. It carries out the reaction (6R)-5,10-methenyltetrahydrofolate + H2O = (6R)-10-formyltetrahydrofolate + H(+). It functions in the pathway one-carbon metabolism; tetrahydrofolate interconversion. In terms of biological role, catalyzes the oxidation of 5,10-methylenetetrahydrofolate to 5,10-methenyltetrahydrofolate and then the hydrolysis of 5,10-methenyltetrahydrofolate to 10-formyltetrahydrofolate. The sequence is that of Bifunctional protein FolD from Azoarcus sp. (strain BH72).